A 242-amino-acid chain; its full sequence is Probable ergothioneine transport ATP-binding protein EgtUA (242 aa).

The ABC transporter domain occupies 2–236 (IEYKNVALRY…PATDFVADLF (235 aa)). 34–41 (GPSGSGKT) is a binding site for ATP.

This sequence belongs to the ABC transporter superfamily. The complex is probably composed of at least an ATP-binding protein (EgtUA) and a transmembrane protein (EgtUBC).

The protein localises to the cell inner membrane. The catalysed reaction is ergothioneine(out) + ATP + H2O = ergothioneine(in) + ADP + phosphate + H(+). Functionally, part of an ABC transporter complex EgtU required for the uptake of ergothioneine (EGT), a natural low-molecular weight (LMW) thiol antioxidant. Probably responsible for energy coupling to the transport system. This Streptococcus pneumoniae serotype 2 (strain D39 / NCTC 7466) protein is Probable ergothioneine transport ATP-binding protein EgtUA.